A 588-amino-acid polypeptide reads, in one-letter code: Transcriptional regulatory protein ASH1 (588 aa).

Phosphoserine is present on Ser-56. 3 disordered regions span residues 85–109 (SNTAPASPHHMDYNPISSLTPGNSP), 377–398 (SNNSKSNVRKPSKNKISKQASN), and 417–495 (SSVS…TRHT). Positions 99-109 (PISSLTPGNSP) are enriched in polar residues. Positions 383–392 (NVRKPSKNKI) are enriched in basic residues. Low complexity predominate over residues 417–433 (SSVSASSSPSPSTPTKS). At Ser-465 the chain carries Phosphoserine. Low complexity predominate over residues 470–493 (PRRSSNSSITKKGSRRSSGSSPTR). A GATA-type; atypical zinc finger spans residues 499-526 (CVSCHSSDSPCWRPSWSPRKQDQLCNSC).

Component of the RPD3C(L) complex composed of at least ASH1, CTI6, DEP1, PHO23, RPD3, RXT2, RXT3, SAP30, SDS3, SIN3, UME1 and UME6.

It is found in the nucleus. In terms of biological role, component of the RPD3C(L) histone deacetylase complex (HDAC). Responsible for the deacetylation of lysine residues on the N-terminal part of the core histones (H2A, H2B, H3 and H4). Histone deacetylation gives a tag for epigenetic repression and plays an important role in transcriptional regulation, cell cycle progression and developmental events. ASH1 is necessary to repress HO in daughter cells to block mating-type switching through its binding to HO promoter 5'-YTGAT-3' sites. Also involved in pseudohyphal growth. The protein is Transcriptional regulatory protein ASH1 (ASH1) of Saccharomyces cerevisiae (strain ATCC 204508 / S288c) (Baker's yeast).